The primary structure comprises 217 residues: Uracil-DNA glycosylase (217 aa).

The active-site Proton acceptor is the Asp62.

The protein belongs to the uracil-DNA glycosylase (UDG) superfamily. UNG family.

It localises to the cytoplasm. It catalyses the reaction Hydrolyzes single-stranded DNA or mismatched double-stranded DNA and polynucleotides, releasing free uracil.. Its function is as follows. Excises uracil residues from the DNA which can arise as a result of misincorporation of dUMP residues by DNA polymerase or due to deamination of cytosine. This chain is Uracil-DNA glycosylase, found in Streptococcus uberis (strain ATCC BAA-854 / 0140J).